Here is a 62-residue protein sequence, read N- to C-terminus: Ponericin-W-like 32.2 (62 aa).

A signal peptide spans 1–23 (MKCKKQLLVIFFAYFLVVNESEA). A propeptide spanning residues 49–62 (RALMKRDLEDIMDP) is cleaved from the precursor.

This sequence belongs to the non-disulfide-bridged peptide (NDBP) superfamily. Medium-length antimicrobial peptide (group 3) family. Ponericin-W subfamily. In terms of tissue distribution, expressed by the venom gland.

It localises to the secreted. It is found in the target cell membrane. Antimicrobial peptide with potent activity against a range of Gram-positive and Gram-negative bacteria. Has high hemolytic activity against erythrocytes. May act by disrupting the integrity of the bacterial cell membrane. This is Ponericin-W-like 32.2 from Lychas mucronatus (Chinese swimming scorpion).